The following is a 688-amino-acid chain: Potassium-transporting ATPase ATP-binding subunit (688 aa).

Helical transmembrane passes span 35–55 (VMMV…VQFA), 62–82 (AVFS…ANLA), 219–239 (IALS…VVTL), and 260–280 (VLVA…LSAI). Aspartate 313 (4-aspartylphosphate intermediate) is an active-site residue. Residues aspartate 350, glutamate 354, 383 to 390 (FSAQTRMS), and lysine 401 contribute to the ATP site. Positions 524 and 528 each coordinate Mg(2+). The next 3 helical transmembrane spans lie at 594-614 (FAIL…LNLM), 622-642 (AILS…PLAL), and 668-688 (VVLP…MGWI).

This sequence belongs to the cation transport ATPase (P-type) (TC 3.A.3) family. Type IA subfamily. The system is composed of three essential subunits: KdpA, KdpB and KdpC.

The protein localises to the cell inner membrane. The catalysed reaction is K(+)(out) + ATP + H2O = K(+)(in) + ADP + phosphate + H(+). Its function is as follows. Part of the high-affinity ATP-driven potassium transport (or Kdp) system, which catalyzes the hydrolysis of ATP coupled with the electrogenic transport of potassium into the cytoplasm. This subunit is responsible for energy coupling to the transport system and for the release of the potassium ions to the cytoplasm. This chain is Potassium-transporting ATPase ATP-binding subunit, found in Tolumonas auensis (strain DSM 9187 / NBRC 110442 / TA 4).